The sequence spans 682 residues: Transcription activator of gluconeogenesis PODANS_4_8760 (682 aa).

Residues 1–72 (MPEDGGPFGS…KDPLRPRRKK (72 aa)) are disordered. Residues 9–21 (GSEAAEASGAMSE) show a composition bias toward low complexity. 2 stretches are compositionally biased toward basic and acidic residues: residues 29–41 (HEPHHKDEDDRMS) and 54–67 (GEVKKKYDPKDPLR). The zn(2)-C6 fungal-type DNA-binding region spans 77–105 (CYACQRAHLTCGDERPCQRCIKRGLQDSC). Disordered stretches follow at residues 122-148 (EALRPVLGPNYNPNAPSSRHGGQRHHS), 181-211 (LTESLPFNSQQSPVSPTFQQTSSNPPISGMV), 325-375 (PAGP…RPSK), 509-541 (NRNTNLGGTGVRTTPRLKSLNESSAENGGAASG), and 586-622 (TDKPAAGGGGGAGEEERKPDPSAAPRQQEKDSRHSIL). 3 stretches are compositionally biased toward polar residues: residues 185–206 (LPFNSQQSPVSPTFQQTSSNPP), 329–345 (TSLQSPSTENNSPQPTT), and 354–373 (PTMSQYPNAPGAKSSSNSRP).

This sequence belongs to the ERT1/acuK family.

It is found in the nucleus. In terms of biological role, transcription factor which regulates nonfermentable carbon utilization. Activator of gluconeogenetic genes. The polypeptide is Transcription activator of gluconeogenesis PODANS_4_8760 (Podospora anserina (strain S / ATCC MYA-4624 / DSM 980 / FGSC 10383) (Pleurage anserina)).